Reading from the N-terminus, the 322-residue chain is NAD(P)H-dependent D-xylose reductase (322 aa).

Tyr52 serves as the catalytic Proton donor. A substrate-binding site is contributed by His114. NAD(+) is bound by residues 169 to 170 (SN), 218 to 227 (SSFGPQSFVE), and 274 to 284 (KSNLPERLVQN).

This sequence belongs to the aldo/keto reductase family. In terms of assembly, homodimer.

It carries out the reaction xylitol + NAD(+) = D-xylose + NADH + H(+). It catalyses the reaction xylitol + NADP(+) = D-xylose + NADPH + H(+). It functions in the pathway carbohydrate metabolism; D-xylose degradation. In terms of biological role, reduces D-xylose into xylitol. Has a preference for NADPH, but can also utilize NADH as cosubstrate. The chain is NAD(P)H-dependent D-xylose reductase (XYL1) from Candida tenuis (Yeast).